The following is a 423-amino-acid chain: UPF0229 protein VV2350 (423 aa).

Residues 81 to 111 (QFITGDKIERPKGGQGGGGAGDGDASADGEG) form a disordered region. The segment covering 93–102 (GGQGGGGAGD) has biased composition (gly residues).

The protein belongs to the UPF0229 family.

The chain is UPF0229 protein VV2350 from Vibrio vulnificus (strain YJ016).